The chain runs to 352 residues: Zinc finger protein 185 (352 aa).

Disordered stretches follow at residues 1-73 and 86-121; these read MTTE…ELQS and DVLP…ITPP. Ser18 carries the phosphoserine modification. Positions 61–72 are enriched in polar residues; that stretch reads KKTTSSPTQELQ. Position 137 is a phosphothreonine (Thr137). A compositionally biased stretch (polar residues) spans 251–268; the sequence is VSSGKPVSSHCDSPSSIE. The tract at residues 251–287 is disordered; it reads VSSGKPVSSHCDSPSSIEDSLDLAKKPPHEGTPSERP. Residues 272-287 are compositionally biased toward basic and acidic residues; the sequence is DLAKKPPHEGTPSERP. Positions 292–347 constitute an LIM zinc-binding domain; sequence CTYCSHEIQDCPKITLEHLGICCHEYCFKCGICNKPMGDLLDQIFIHRDTIHCGKC.

In terms of tissue distribution, expressed in skin, kidney, ovary, testis. Also expressed in brain, cartilage, heart, lung, spleen and thymus.

It is found in the cytoplasm. The protein resides in the cytoskeleton. Its subcellular location is the cell junction. The protein localises to the focal adhesion. May be involved in the regulation of cellular proliferation and/or differentiation. This Mus musculus (Mouse) protein is Zinc finger protein 185 (Znf185).